The chain runs to 310 residues: MSEFLTVAFYKFVELQDYAELKAPLLACCQDNDVQGTILLATEGINGAIAGLPHNIHTVLDFLCGDPRFADLAPKESWSEKRPFYRMKVRLKKEIIKMGVPDIDPTQTVGEYVKPEDWNQLLADPDVVVIDVRNDYEVAIGTFKGAINPNTKSFSELPEWLQEQAELQKKPKVAMFCTGGIRCEKSTALLRHEGFEDVFHLQGGILSYLEKVPEDESLWQGDCFVFDERVAVGHGLKPGRYQLCRACRTPISPEDMKSEHYVPGQSCPHCYGTKTEEQQQRFAERQRQIELAKQRNQVHIGAKYSRHQPG.

One can recognise a Rhodanese domain in the interval 123-217; the sequence is ADPDVVVIDV…YLEKVPEDES (95 aa). The Cysteine persulfide intermediate role is filled by Cys177.

It belongs to the TrhO family.

It carries out the reaction uridine(34) in tRNA + AH2 + O2 = 5-hydroxyuridine(34) in tRNA + A + H2O. Catalyzes oxygen-dependent 5-hydroxyuridine (ho5U) modification at position 34 in tRNAs. This is tRNA uridine(34) hydroxylase from Acaryochloris marina (strain MBIC 11017).